The sequence spans 236 residues: Leucyl/phenylalanyl-tRNA--protein transferase (236 aa).

The protein belongs to the L/F-transferase family.

Its subcellular location is the cytoplasm. It carries out the reaction N-terminal L-lysyl-[protein] + L-leucyl-tRNA(Leu) = N-terminal L-leucyl-L-lysyl-[protein] + tRNA(Leu) + H(+). The enzyme catalyses N-terminal L-arginyl-[protein] + L-leucyl-tRNA(Leu) = N-terminal L-leucyl-L-arginyl-[protein] + tRNA(Leu) + H(+). The catalysed reaction is L-phenylalanyl-tRNA(Phe) + an N-terminal L-alpha-aminoacyl-[protein] = an N-terminal L-phenylalanyl-L-alpha-aminoacyl-[protein] + tRNA(Phe). In terms of biological role, functions in the N-end rule pathway of protein degradation where it conjugates Leu, Phe and, less efficiently, Met from aminoacyl-tRNAs to the N-termini of proteins containing an N-terminal arginine or lysine. This is Leucyl/phenylalanyl-tRNA--protein transferase from Shewanella loihica (strain ATCC BAA-1088 / PV-4).